A 306-amino-acid polypeptide reads, in one-letter code: tRNA N6-adenosine threonylcarbamoyltransferase (306 aa).

2 residues coordinate Fe cation: histidine 110 and histidine 114. Substrate is bound by residues 132–136, aspartate 165, glycine 178, aspartate 182, and asparagine 268; that span reads IASGK. Aspartate 292 serves as a coordination point for Fe cation.

It belongs to the KAE1 / TsaD family. Fe(2+) is required as a cofactor.

Its subcellular location is the cytoplasm. It carries out the reaction L-threonylcarbamoyladenylate + adenosine(37) in tRNA = N(6)-L-threonylcarbamoyladenosine(37) in tRNA + AMP + H(+). Functionally, required for the formation of a threonylcarbamoyl group on adenosine at position 37 (t(6)A37) in tRNAs that read codons beginning with adenine. Is involved in the transfer of the threonylcarbamoyl moiety of threonylcarbamoyl-AMP (TC-AMP) to the N6 group of A37, together with TsaE and TsaB. TsaD likely plays a direct catalytic role in this reaction. The protein is tRNA N6-adenosine threonylcarbamoyltransferase of Malacoplasma penetrans (strain HF-2) (Mycoplasma penetrans).